The chain runs to 433 residues: Glutamate-1-semialdehyde 2,1-aminomutase (433 aa).

Residue K271 is modified to N6-(pyridoxal phosphate)lysine.

The protein belongs to the class-III pyridoxal-phosphate-dependent aminotransferase family. HemL subfamily. In terms of assembly, homodimer. Requires pyridoxal 5'-phosphate as cofactor.

It localises to the cytoplasm. The enzyme catalyses (S)-4-amino-5-oxopentanoate = 5-aminolevulinate. It participates in porphyrin-containing compound metabolism; protoporphyrin-IX biosynthesis; 5-aminolevulinate from L-glutamyl-tRNA(Glu): step 2/2. The protein operates within porphyrin-containing compound metabolism; chlorophyll biosynthesis. The protein is Glutamate-1-semialdehyde 2,1-aminomutase of Prochlorococcus marinus (strain MIT 9515).